The primary structure comprises 424 residues: Arginine biosynthesis bifunctional protein ArgJ (424 aa).

Substrate contacts are provided by T166, K192, T203, E290, N419, and T424. T203 (nucleophile) is an active-site residue.

This sequence belongs to the ArgJ family. Heterotetramer of two alpha and two beta chains.

The protein localises to the cytoplasm. It catalyses the reaction N(2)-acetyl-L-ornithine + L-glutamate = N-acetyl-L-glutamate + L-ornithine. The catalysed reaction is L-glutamate + acetyl-CoA = N-acetyl-L-glutamate + CoA + H(+). It participates in amino-acid biosynthesis; L-arginine biosynthesis; L-ornithine and N-acetyl-L-glutamate from L-glutamate and N(2)-acetyl-L-ornithine (cyclic): step 1/1. The protein operates within amino-acid biosynthesis; L-arginine biosynthesis; N(2)-acetyl-L-ornithine from L-glutamate: step 1/4. In terms of biological role, catalyzes two activities which are involved in the cyclic version of arginine biosynthesis: the synthesis of N-acetylglutamate from glutamate and acetyl-CoA as the acetyl donor, and of ornithine by transacetylation between N(2)-acetylornithine and glutamate. In Colwellia psychrerythraea (strain 34H / ATCC BAA-681) (Vibrio psychroerythus), this protein is Arginine biosynthesis bifunctional protein ArgJ.